Here is a 275-residue protein sequence, read N- to C-terminus: Dermonecrotic toxin LhSicTox-alphaVI1ii (275 aa).

Residue histidine 5 is part of the active site. Residues glutamate 25 and aspartate 27 each contribute to the Mg(2+) site. Residue histidine 41 is the Nucleophile of the active site. 2 disulfides stabilise this stretch: cysteine 45–cysteine 51 and cysteine 47–cysteine 192. Residue aspartate 85 coordinates Mg(2+).

It belongs to the arthropod phospholipase D family. Class II subfamily. Mg(2+) is required as a cofactor. As to expression, expressed by the venom gland.

The protein resides in the secreted. The enzyme catalyses an N-(acyl)-sphingosylphosphocholine = an N-(acyl)-sphingosyl-1,3-cyclic phosphate + choline. It carries out the reaction an N-(acyl)-sphingosylphosphoethanolamine = an N-(acyl)-sphingosyl-1,3-cyclic phosphate + ethanolamine. It catalyses the reaction a 1-acyl-sn-glycero-3-phosphocholine = a 1-acyl-sn-glycero-2,3-cyclic phosphate + choline. The catalysed reaction is a 1-acyl-sn-glycero-3-phosphoethanolamine = a 1-acyl-sn-glycero-2,3-cyclic phosphate + ethanolamine. Functionally, dermonecrotic toxins cleave the phosphodiester linkage between the phosphate and headgroup of certain phospholipids (sphingolipid and lysolipid substrates), forming an alcohol (often choline) and a cyclic phosphate. This toxin acts on sphingomyelin (SM). It may also act on ceramide phosphoethanolamine (CPE), lysophosphatidylcholine (LPC) and lysophosphatidylethanolamine (LPE), but not on lysophosphatidylserine (LPS), and lysophosphatidylglycerol (LPG). It acts by transphosphatidylation, releasing exclusively cyclic phosphate products as second products. Induces dermonecrosis, hemolysis, increased vascular permeability, edema, inflammatory response, and platelet aggregation. This is Dermonecrotic toxin LhSicTox-alphaVI1ii from Loxosceles hirsuta (Recluse spider).